The primary structure comprises 711 residues: MARSRSRSPRWKHRSLSPVPRNAEHYKQRHSHGHYGCEYRKDPKRPVAWRMDSEKHGQSKPRIPSRGNIYYQSYEHRSPSPNIRNSLENVYMYKPHRGYSPGRGDSNRRAQYMPKYSEGIPYKEHERNSYPQKVQGGHSPDDHRVRGSGKGGKPPQRSIADSFRFEGKWHEDELRHQRIQEEKYSQSTRRGSEDFETRSSFQKRYPEDRDFRKYGHTSKRPKDVERYESREPARNPKWKPEHSLPPYQEDTDQWNLGPQTYRHAEREHPETSSATKVSYDYRHKRPKLLDGDQDFSDGRTQKYCKEEDRKYSFQKGPLNRELDCFNTGRGRETQDGQVKEPFKPSKKDSIACTYSNKNDVDLRSSNDKWKEKIKKEGDCRKESNSSSNQLDKSQKLPDVKPSPINLRKKSLTVKVDVKKTVDTFRVASSYSTERQMSHDLVAVGRKSENFHPVFEHLDSTQNTENKPTGEFAQEIITIIHQVKANYFPSPGITLHERFSTMQDIHKADVNEIPLNSDPEIHRRIDMSLAELQSKQAVIYESEQTLIKIIDPNDLRHDIERRRKERLQNEDEHIFHIASAAERDDQNSSFSKVKNVHTDGFQKPTHFIKSNFRKCIEKPYMNYTTQRKDIITHKPFEVEGNHRNTRVRPFKSNFRGGRCQPNYKSGLVQKSLYIQAKYQRLRFTGPRGFITHKFRERLMRKKKEYTDVATGI.

The segment covering 1 to 15 has biased composition (basic residues); the sequence is MARSRSRSPRWKHRS. 2 disordered regions span residues 1-42 and 48-67; these read MARS…YRKD and AWRM…PSRG. Ser15 and Ser17 each carry phosphoserine. Residues 48-57 are compositionally biased toward basic and acidic residues; sequence AWRMDSEKHG. A phosphoserine mark is found at Ser78, Ser80, and Ser187. 2 disordered regions span residues 94-350 and 371-404; these read KPHR…KDSI and EKIK…PSPI. Composition is skewed to basic and acidic residues over residues 163–197, 204–213, 220–242, 296–311, 318–349, and 371–383; these read FRFE…DFET, RYPEDRDFRK, RPKD…KPEH, SDGR…DRKY, LNRE…KKDS, and EKIK…RKES. Lys400 participates in a covalent cross-link: Glycyl lysine isopeptide (Lys-Gly) (interchain with G-Cter in SUMO2). Phosphoserine occurs at positions 402 and 578.

This sequence belongs to the BCLAF1/THRAP3 family.

Its subcellular location is the mitochondrion. The chain is BCLAF1 and THRAP3 family member 3 from Homo sapiens (Human).